Here is a 313-residue protein sequence, read N- to C-terminus: Protein FixB (313 aa).

FAD is bound at residue 255–283; it reads LYLAVGISGQIQHMVGANASQTIFAINKD.

The protein belongs to the ETF alpha-subunit/FixB family. In terms of assembly, heterodimer of FixA and FixB.

It functions in the pathway amine and polyamine metabolism; carnitine metabolism. Required for anaerobic carnitine reduction. May bring reductant to CaiA. The chain is Protein FixB from Escherichia coli (strain 55989 / EAEC).